The following is a 150-amino-acid chain: MSYTCNSGNYSSQSFGGFLRQPVSTYNSFYPTSNVVYSPKNFQLGSSFYNGQQETFSEPLEGHLPCVGSASFHTSCFRPKQYFSSPCQGGFTGSFGYGNTGFGAFGFGSSGIRSQGCGSNFYRPGYFSSKSIQSSYYQPGYSSGFCGSNF.

The protein belongs to the PMG family. Interacts with hair keratins. In terms of tissue distribution, expressed at high levels in skin and at lower levels in the developing mammary gland.

In the hair cortex, hair keratin intermediate filaments are embedded in an interfilamentous matrix, consisting of hair keratin-associated proteins (KRTAP), which are essential for the formation of a rigid and resistant hair shaft through their extensive disulfide bond cross-linking with abundant cysteine residues of hair keratins. The matrix proteins include the high-sulfur and high-glycine-tyrosine keratins. The polypeptide is Keratin-associated protein 15-1 (Mus musculus (Mouse)).